The sequence spans 208 residues: Calcyphosin-like protein (208 aa).

4 EF-hand domains span residues 39–74, 75–110, 111–146, and 154–191; these read AGIK…YAVV, MEKE…PMSR, ARKE…KHHP, and SEEQ…VSAS. D52, D54, N56, T58, E63, D88, D90, N92, T94, and E99 together coordinate Ca(2+).

The protein localises to the cytoplasm. The sequence is that of Calcyphosin-like protein (CAPSL) from Homo sapiens (Human).